The following is a 166-amino-acid chain: Cofilin-1 (166 aa).

At A2 the chain carries N-acetylalanine. S3 and S8 each carry phosphoserine. An ADF-H domain is found at 4-153 (GVAVSDGVIK…KDRCTLAEKL (150 aa)). Position 13 is an N6-acetyllysine (K13). T25 bears the Phosphothreonine mark. The Nuclear localization signal motif lies at 30-34 (KKRKK). Residue S41 is modified to Phosphoserine. T63 carries the post-translational modification Phosphothreonine. Residue Y68 is modified to Phosphotyrosine. K73 carries the N6-acetyllysine modification. At Y82 the chain carries Phosphotyrosine. Residue K132 forms a Glycyl lysine isopeptide (Lys-Gly) (interchain with G-Cter in SUMO2) linkage. Y140 carries the phosphotyrosine modification. N6-acetyllysine is present on K144. S156 bears the Phosphoserine mark.

The protein belongs to the actin-binding proteins ADF family. Can bind G- and F-actin in a 1:1 ratio of cofilin to actin. It is a major component of intranuclear and cytoplasmic actin rods. Interacts with the subcortical maternal complex (SCMC) via interaction with TLE6 and NLRP5. Interacts with C9orf72. In terms of processing, inactivated by phosphorylation on Ser-3. Phosphorylated on Ser-3 in resting cells. Dephosphorylated by PDXP/chronophin; this restores its activity in promoting actin filament depolymerization. The phosphorylation of Ser-24 may prevent recognition of the nuclear localization signal. Phosphorylated via a ARRB1-RAC1-LIMK1-PAK1 cascade upon active ligand stimulation of atypical chemokine receptor ACKR2. Widely distributed in various tissues. Not found in skeletal muscle.

Its subcellular location is the nucleus matrix. It is found in the cytoplasm. It localises to the cytoskeleton. The protein localises to the cell projection. The protein resides in the ruffle membrane. Its subcellular location is the lamellipodium membrane. It is found in the lamellipodium. It localises to the growth cone. The protein localises to the axon. Functionally, binds to F-actin and exhibits pH-sensitive F-actin depolymerizing activity. In conjunction with the subcortical maternal complex (SCMC), plays an essential role for zygotes to progress beyond the first embryonic cell divisions via regulation of actin dynamics. Required for the centralization of the mitotic spindle and symmetric division of zygotes. Plays a role in the regulation of cell morphology and cytoskeletal organization in epithelial cells. Required for the up-regulation of atypical chemokine receptor ACKR2 from endosomal compartment to cell membrane, increasing its efficiency in chemokine uptake and degradation. Required for neural tube morphogenesis and neural crest cell migration. The chain is Cofilin-1 (Cfl1) from Mus musculus (Mouse).